Reading from the N-terminus, the 213-residue chain is Motile sperm domain-containing protein 1 (213 aa).

Positions 16-143 (PVFVFPTELI…KEHLTESLFF (128 aa)) constitute an MSP domain. The next 2 helical transmembrane spans lie at 159–179 (SLLTVFLAVVCITALMLPTLG) and 191–211 (LSVNQKLVAAYILGLITMAIF). The Nuclear export signal signature appears at 205-208 (LITM).

It localises to the endoplasmic reticulum membrane. The protein localises to the golgi apparatus membrane. In terms of biological role, plays a role in differentiation and/or proliferation of mesenchymal stem cells. Proposed to be involved in epithelial-to-mesenchymal transition (EMT). However, another study suggests that it is not required for EMT or stem cell self-renewal and acts during later stages of differentiation. This Bos taurus (Bovine) protein is Motile sperm domain-containing protein 1 (MOSPD1).